We begin with the raw amino-acid sequence, 489 residues long: Probable cytosol aminopeptidase (489 aa).

Lysine 254 and aspartate 259 together coordinate Mn(2+). Lysine 266 is a catalytic residue. Residues aspartate 277, aspartate 336, and glutamate 338 each contribute to the Mn(2+) site. The active site involves arginine 340.

Belongs to the peptidase M17 family. It depends on Mn(2+) as a cofactor.

The protein resides in the cytoplasm. It carries out the reaction Release of an N-terminal amino acid, Xaa-|-Yaa-, in which Xaa is preferably Leu, but may be other amino acids including Pro although not Arg or Lys, and Yaa may be Pro. Amino acid amides and methyl esters are also readily hydrolyzed, but rates on arylamides are exceedingly low.. The enzyme catalyses Release of an N-terminal amino acid, preferentially leucine, but not glutamic or aspartic acids.. In terms of biological role, presumably involved in the processing and regular turnover of intracellular proteins. Catalyzes the removal of unsubstituted N-terminal amino acids from various peptides. This is Probable cytosol aminopeptidase from Cereibacter sphaeroides (strain ATCC 17025 / ATH 2.4.3) (Rhodobacter sphaeroides).